The primary structure comprises 167 residues: tRNA-specific adenosine deaminase (167 aa).

The region spanning 6 to 117 (FSHEYWMRHA…DAKTGAAGSL (112 aa)) is the CMP/dCMP-type deaminase domain. Residue histidine 57 participates in Zn(2+) binding. Catalysis depends on glutamate 59, which acts as the Proton donor. Residues cysteine 87 and cysteine 90 each coordinate Zn(2+).

This sequence belongs to the cytidine and deoxycytidylate deaminase family. Homodimer. The cofactor is Zn(2+).

The enzyme catalyses adenosine(34) in tRNA + H2O + H(+) = inosine(34) in tRNA + NH4(+). Catalyzes the deamination of adenosine to inosine at the wobble position 34 of tRNA(Arg2). Essential for cell viability. The sequence is that of tRNA-specific adenosine deaminase from Escherichia coli (strain K12).